We begin with the raw amino-acid sequence, 348 residues long: Protein RecA (348 aa).

67-74 (GPESSGKT) serves as a coordination point for ATP.

This sequence belongs to the RecA family.

Its subcellular location is the cytoplasm. Its function is as follows. Can catalyze the hydrolysis of ATP in the presence of single-stranded DNA, the ATP-dependent uptake of single-stranded DNA by duplex DNA, and the ATP-dependent hybridization of homologous single-stranded DNAs. It interacts with LexA causing its activation and leading to its autocatalytic cleavage. The protein is Protein RecA of Clostridioides difficile (strain 630) (Peptoclostridium difficile).